The following is a 400-amino-acid chain: Delta(12) fatty acid desaturase (400 aa).

Residues leucine 91–alanine 111 form a helical membrane-spanning segment. The short motif at histidine 112 to histidine 116 is the Histidine box-1 element. Residues histidine 148–histidine 152 carry the Histidine box-2 motif. 3 helical membrane passes run isoleucine 199 to methionine 219, phenylalanine 245 to alanine 265, and tyrosine 277 to histidine 297. A Histidine box-3 motif is present at residues histidine 339 to histidine 343.

This sequence belongs to the fatty acid desaturase type 1 family.

The protein resides in the membrane. It catalyses the reaction (9Z)-octadecenoyl-CoA + 2 Fe(II)-[cytochrome b5] + O2 + 2 H(+) = (9Z,12Z)-octadecadienoyl-CoA + 2 Fe(III)-[cytochrome b5] + 2 H2O. It carries out the reaction (9Z)-hexadecenoyl-CoA + 2 Fe(II)-[cytochrome b5] + O2 + 2 H(+) = (9Z,12Z)-hexadecadienoyl-CoA + 2 Fe(III)-[cytochrome b5] + 2 H2O. Its pathway is lipid metabolism; polyunsaturated fatty acid biosynthesis. In terms of biological role, catalyzes the desaturation of oleic acid (Delta(9)-18:1) to linoleic acid (Delta(9), Delta(12)-18:2). This is Delta(12) fatty acid desaturase from Mortierella alpina (Oleaginous fungus).